Consider the following 687-residue polypeptide: Adhesion G-protein coupled receptor G1 (687 aa).

The signal sequence occupies residues 1 to 25 (MAVQVLRQMVYFLLSLFSLVQGAHS). 26–33 (GSPREDFR) is a heparin binding site. Residues 26-402 (GSPREDFRFC…TEVEATHKHY (377 aa)) lie on the Extracellular side of the membrane. 2 cysteine pairs are disulfide-bonded: cysteine 35–cysteine 91 and cysteine 121–cysteine 177. 3 N-linked (GlcNAc...) asparagine glycosylation sites follow: asparagine 39, asparagine 148, and asparagine 171. Heparin is bound at residue 190–200 (LQHPQKAAKRP). The GAIN-B domain occupies 224–395 (DTLSFEEDRV…AVLMVSSTEV (172 aa)). Residues asparagine 234, asparagine 303, asparagine 324, and asparagine 341 are each glycosylated (N-linked (GlcNAc...) asparagine). Cystine bridges form between cysteine 346–cysteine 377 and cysteine 366–cysteine 379. Residues 346–395 (CVFWVEDPASSSTGSWSSAGCETVSRDTQTSCLCNHLTYFAVLMVSSTEV) are GPS. The segment at 384–397 (YFAVLMVSSTEVEA) is stachel. Residues 403-423 (LTLLSYVGCVISALACVFTIA) traverse the membrane as a helical segment. The Cytoplasmic portion of the chain corresponds to 424–442 (AYLCSRRKSRDYTIKVHMN). Residues 443–463 (LLSAVFLLDVSFLLSEPVALT) traverse the membrane as a helical segment. Topologically, residues 464–471 (GSEAACRT) are extracellular. A helical transmembrane segment spans residues 472–492 (SAMFLHFSLLACLSWMGLEGY). The Cytoplasmic portion of the chain corresponds to 493-512 (NLYRLVVEVFGTYVPGYLLK). A helical membrane pass occupies residues 513-533 (LSIVGWGFPVFLVTLVALVDV). Over 534–570 (NNYGPIILAVRRTPERVTYPSMCWIRDSLVSYVTNLG) the chain is Extracellular. Residues 571-591 (LFSLVFLFNLAMLATMVVQIL) traverse the membrane as a helical segment. Over 592 to 603 (RLRPHSQNWPHV) the chain is Cytoplasmic. The helical transmembrane segment at 604-624 (LTLLGLSLVLGLPWALVFFSF) threads the bilayer. The Extracellular portion of the chain corresponds to 625–630 (ASGTFQ). A helical membrane pass occupies residues 631-651 (LVILYLFSIITSFQGFLIFLW). Residues 652–687 (YWSMRFQAQGGPSPLKNNSDSAKLPISSGSTSSSRI) are Cytoplasmic-facing. A disordered region spans residues 664 to 687 (SPLKNNSDSAKLPISSGSTSSSRI). Residues 678-687 (SSGSTSSSRI) are compositionally biased toward low complexity.

Belongs to the G-protein coupled receptor 2 family. LN-TM7 subfamily. As to quaternary structure, heterodimer of 2 chains generated by proteolytic processing; the large extracellular N-terminal fragment (ADGRG1 NT) and the membrane-bound C-terminal fragment (ADGRG1-CT) predominantly remain associated and non-covalently linked. ADGRG1 NT self-associates in a trans-trans manner; the homophilic interaction enhances receptor signaling. Interacts with TGM2. Interacts with heparin; leading to the reduction of ADGRG1 shedding. Interacts with COL3A1. Part of a GPCR-tetraspanin complex at least consisting of ADGRG1, CD81, eventually CD9, and GNA11 in which CD81 is enhancing the association of ADGRG1 with GNA11. In terms of processing, autoproteolytically cleaved into 2 fragments; the large extracellular N-terminal fragment and the membroune-bound C-terminal fragment predominantly remain associated and non-covalently linked. N-glycosylated. The secreted ADGRG1 N-terminal fragment is heavily glycosylated. Post-translationally, ubiquitinated. Undergoes polyubiquitination upon activation. In terms of tissue distribution, expressed in neural progenitor cells in fetal forbrain. Expressed in migrating neurons. Expressed in radial glial endfeet (at protein level). Expressed in peritubular myoid cells, Sertoli cells, and germ cells of the testis.

Its subcellular location is the cell membrane. It is found in the secreted. It localises to the membrane raft. Its activity is regulated as follows. Forms a heterodimer of 2 chains generated by proteolytic processing that remain associated through non-covalent interactions mediated by the GAIN-B domain. In the inactivated receptor, the Stachel sequence (also named stalk) is embedded in the GAIN-B domain, where it adopts a beta-strand conformation. On activation, the Stachel moves into the 7 transmembrane region and adopts a twisted hook-shaped configuration that forms contacts within the receptor, leading to coupling of a G-alpha protein, which activates signaling. The cleaved GAIN-B and N-terminal domains can then dissociate from the rest of the receptor. Activated by the small-molecule agonist, 3-alpha-acetoxydihydrodeoxygedunin (3-alpha-DOG). Functionally, adhesion G-protein coupled receptor (aGPCR) for steroid hormone 17alpha-hydroxypregnenolone (17-OH), which is involved in cell adhesion and cell-cell interactions. Ligand binding causes a conformation change that triggers signaling via guanine nucleotide-binding proteins (G proteins) and modulates the activity of downstream effectors, such as RhoA pathway. ADGRG1 is coupled to G(12) and/or G(13) G proteins (GNA12 and GNA13, respectively) and mediates the activation Rho small GTPases. Acts as a potent suppressor of ferroptosis: binding to 17-OH-binding initiates signaling that down-regulates CD36 and alleviates ferroptosis-induced liver injury. Ligand-binding also induces cell adhesion activity via association with proteins such as collagen III/COL3A1 and TGM2. Mediates cell matrix adhesion in developing neurons and hematopoietic stem cells. Involved in cortical development, specifically in maintenance of the pial basement membrane integrity and in cortical lamination: association with COL3A1 in the developing brain inhibits neuronal migration via activation of the RhoA pathway. Together with TGM2, acts as a regulator of myelination and myelin repair in oligodendrocyte precursor cells. Acts as a hemostatic sensor of shear force: G protein-coupled receptor signaling is activated in response to shear force in platelets, promoting G(13) G protein signaling, and platelet shape change and aggregation in a COL3A1-dependent manner. Acts as an inhibitor of VEGFA production thereby inhibiting angiogenesis through a signaling pathway mediated by PRKCA. Plays a role in the maintenance of hematopoietic stem cells in bone marrow niche. Plays an essential role in testis development. Its function is as follows. Adhesion G-protein coupled receptor (aGPCR) for phosphatidylserine, which is involved in microglia-mediated synapse pruning during development. Required to maintain appropriate synaptic numbers in several brain regions in a time- and circuit-dependent fashion: phosphatidylserine-binding acts as a 'eat-me' signal for apoptotic cells, leading to microglial engulfment of phosphatidylserine-positive synapses. This chain is Adhesion G-protein coupled receptor G1, found in Mus musculus (Mouse).